The chain runs to 298 residues: tRNA (guanine(9)-N1)-methyltransferase (298 aa).

Residues 1-10 (MSDTSENSNA) show a composition bias toward polar residues. Positions 1–44 (MSDTSENSNAEIPADTSDVKDKPKPIVRAPQFPPPPEGISKSQW) are disordered. The SAM-dependent MTase TRM10-type domain occupies 96–285 (PPKVNLNQSD…SVLPPRKLEV (190 aa)). S-adenosyl-L-methionine is bound by residues 192–193 (LT), Gly212, 216–220 (DKNRH), Cys224, Leu238, and 250–252 (KVL). The active-site Proton acceptor is the Asp216.

It belongs to the class IV-like SAM-binding methyltransferase superfamily. TRM10 family. As to quaternary structure, monomer.

It is found in the cytoplasm. Its subcellular location is the nucleus. The enzyme catalyses guanosine(9) in tRNA + S-adenosyl-L-methionine = N(1)-methylguanosine(9) in tRNA + S-adenosyl-L-homocysteine + H(+). Functionally, S-adenosyl-L-methionine-dependent guanine N(1)-methyltransferase that catalyzes the formation of N(1)-methylguanine at position 9 (m1G9) in cytoplasmic tRNA. In Kluyveromyces lactis (strain ATCC 8585 / CBS 2359 / DSM 70799 / NBRC 1267 / NRRL Y-1140 / WM37) (Yeast), this protein is tRNA (guanine(9)-N1)-methyltransferase.